The chain runs to 688 residues: NADPH-dependent diflavin oxidoreductase 1 (688 aa).

Residues 26–76 (HLHRHADTSPTNQHNTSHKMTTTEPIHVTTGSGESRDHTEPRHVTPTSPNA) are disordered. Residues 33–58 (TSPTNQHNTSHKMTTTEPIHVTTGSG) show a composition bias toward polar residues. Residues 59 to 68 (ESRDHTEPRH) show a composition bias toward basic and acidic residues. One can recognise a Flavodoxin-like domain in the interval 82-227 (ITIAYATETG…MYNEWQARFC (146 aa)). Residues 88–93 (TETGNA), 136–139 (STTG), 174–183 (LGDSSYPRFN), and D209 each bind FMN. One can recognise an FAD-binding FR-type domain in the interval 277-543 (KDVLQGTVVG…KHSTPIPDLD (267 aa)). FAD-binding positions include R453, 483-486 (RLFS), and 515-518 (GVLT). Residues T554, 607-608 (SR), and 613-617 (GGYVQ) each bind NADP(+). Residue W688 participates in FAD binding.

This sequence belongs to the NADPH-dependent diflavin oxidoreductase NDOR1 family. The protein in the N-terminal section; belongs to the flavodoxin family. It in the C-terminal section; belongs to the flavoprotein pyridine nucleotide cytochrome reductase family. In terms of assembly, interacts with DRE2; as part of the cytosolic iron-sulfur (Fe-S) protein assembly (CIA) machinery. Requires FAD as cofactor. The cofactor is FMN.

Its subcellular location is the cytoplasm. It is found in the mitochondrion. The catalysed reaction is 2 oxidized [2Fe-2S]-[protein] + NADPH = 2 reduced [2Fe-2S]-[protein] + NADP(+) + H(+). NADPH-dependent reductase which is a central component of the cytosolic iron-sulfur (Fe-S) protein assembly (CIA) machinery. Transfers electrons from NADPH via its FAD and FMN prosthetic groups to the [2Fe-2S] cluster of DRE2, another key component of the CIA machinery. In turn, this reduced cluster provides electrons for assembly of cytosolic iron-sulfur cluster proteins. Positively controls H(2)O(2)-induced cell death. The chain is NADPH-dependent diflavin oxidoreductase 1 from Yarrowia lipolytica (strain CLIB 122 / E 150) (Yeast).